A 755-amino-acid chain; its full sequence is Xaa-Pro dipeptidyl-peptidase (755 aa).

Active-site charge relay system residues include serine 348, aspartate 468, and histidine 498.

Belongs to the peptidase S15 family. As to quaternary structure, homodimer.

It is found in the cytoplasm. It catalyses the reaction Hydrolyzes Xaa-Pro-|- bonds to release unblocked, N-terminal dipeptides from substrates including Ala-Pro-|-p-nitroanilide and (sequentially) Tyr-Pro-|-Phe-Pro-|-Gly-Pro-|-Ile.. Removes N-terminal dipeptides sequentially from polypeptides having unsubstituted N-termini provided that the penultimate residue is proline. This Streptococcus thermophilus (strain ATCC BAA-491 / LMD-9) protein is Xaa-Pro dipeptidyl-peptidase.